A 101-amino-acid chain; its full sequence is MDVAPNWYLALSAVLFTIGTFGVLFRRNAIVVLMSVELMLNAVNLTLVTFSQSMGDPSGQLLVFFSIAVAAAEAAVGLAIVIAIFRSQVTVDITEINLFKH.

Transmembrane regions (helical) follow at residues 5–25 (PNWY…GVLF), 30–50 (IVVL…LVTF), and 62–82 (LVFF…AIVI).

Belongs to the complex I subunit 4L family. As to quaternary structure, NDH-1 is composed of 14 different subunits. Subunits NuoA, H, J, K, L, M, N constitute the membrane sector of the complex.

It is found in the cell inner membrane. The enzyme catalyses a quinone + NADH + 5 H(+)(in) = a quinol + NAD(+) + 4 H(+)(out). Its function is as follows. NDH-1 shuttles electrons from NADH, via FMN and iron-sulfur (Fe-S) centers, to quinones in the respiratory chain. The immediate electron acceptor for the enzyme in this species is believed to be a menaquinone. Couples the redox reaction to proton translocation (for every two electrons transferred, four hydrogen ions are translocated across the cytoplasmic membrane), and thus conserves the redox energy in a proton gradient. This is NADH-quinone oxidoreductase subunit K from Salinibacter ruber (strain DSM 13855 / M31).